The sequence spans 220 residues: MNNQNVDDHNLLLISQLYPNVYTPLVPQQGGEAKPTRRRKRKSKSVVVAEEGENEGNGWFRKRKLSDEQVRMLEISFEDDHKLESERKDRLASELGLDPRQVAVWFQNRRARWKNKRVEDEYTKLKNAYETTVVEKCRLDSEVIHLKEQLYEAEREIQRLAKRVEGTLSNSPISSSVTIEANHTTPFFGDYDIGFDGEADENLLYSPDYIDGLDWMSQFM.

Residues 26-48 form a disordered region; it reads VPQQGGEAKPTRRRKRKSKSVVV. The homeobox DNA-binding region spans 58–117; the sequence is GWFRKRKLSDEQVRMLEISFEDDHKLESERKDRLASELGLDPRQVAVWFQNRRARWKNKR. The segment at 118 to 146 is leucine-zipper; the sequence is VEDEYTKLKNAYETTVVEKCRLDSEVIHL.

Belongs to the HD-ZIP homeobox family. Class I subfamily. Widely expressed.

Its subcellular location is the nucleus. Its function is as follows. Probable transcription factor. This chain is Homeobox-leucine zipper protein ATHB-21 (ATHB-21), found in Arabidopsis thaliana (Mouse-ear cress).